The primary structure comprises 663 residues: RING finger protein 145 (663 aa).

14 consecutive transmembrane segments (helical) span residues 53 to 73 (YLAL…LTLP), 77 to 97 (LVQL…HQIS), 123 to 143 (FTTA…VMKT), 146 to 166 (IWLF…VPLE), 168 to 188 (IVII…YFLG), 205 to 222 (LVQV…MSLW), 225 to 245 (LVVP…QIYS), 275 to 295 (YSLL…LTLC), 316 to 336 (TEGV…LQVV), 340 to 360 (FLLS…MLEI), 384 to 404 (SLCL…CQFF), 410 to 430 (LLII…TLFI), 460 to 480 (LLEF…TIFG), and 482 to 502 (WTVM…WLRA). The YLYF motif signature appears at 81–84 (YLYF). Cys537 is a catalytic residue. Residues 537 to 575 (CAICYQDMKSAVITPCSHFFHAGCLKKWLYVQDTCPLCH) form an RING-type; atypical zinc finger. Residues 587–663 (LGTEAAPQPP…EGEVCPVESA (77 aa)) form a disordered region. Residues 619-628 (GTGTQEGSGD) show a composition bias toward polar residues.

As to quaternary structure, interacts (via YLYF motif) with INSIG1 and INSIG2.

The protein localises to the endoplasmic reticulum membrane. The catalysed reaction is S-ubiquitinyl-[E2 ubiquitin-conjugating enzyme]-L-cysteine + [acceptor protein]-L-lysine = [E2 ubiquitin-conjugating enzyme]-L-cysteine + N(6)-ubiquitinyl-[acceptor protein]-L-lysine.. In terms of biological role, E3 ubiquitin ligase that catalyzes the direct transfer of ubiquitin from E2 ubiquitin-conjugating enzyme to a specific substrate. In response to bacterial infection, negatively regulates the phagocyte oxidative burst by controlling the turnover of the NADPH oxidase complex subunits. Promotes monoubiquitination of CYBA and 'Lys-48'-linked polyubiquitination and degradation of CYBB NADPH oxidase catalytic subunits, both essential for the generation of antimicrobial reactive oxygen species. Involved in the maintenance of cholesterol homeostasis. In response to high sterol concentrations ubiquitinates HMGCR, a rate-limiting enzyme in cholesterol biosynthesis, and targets it for degradation. The interaction with INSIG1 is required for this function. In addition, triggers ubiquitination of SCAP, likely inhibiting its transport to the Golgi apparatus and the subsequent processing/maturation of SREBPF2, ultimately down-regulating cholesterol biosynthesis. The sequence is that of RING finger protein 145 from Mus musculus (Mouse).